Consider the following 44-residue polypeptide: Photosystem I reaction center subunit IX (44 aa).

Residues 7–27 (YLSVAPVLSTLSLGFFAGFLI) form a helical membrane-spanning segment.

Belongs to the PsaJ family.

It localises to the plastid membrane. Its function is as follows. May help in the organization of the PsaE and PsaF subunits. This Cuscuta obtusiflora (Peruvian dodder) protein is Photosystem I reaction center subunit IX.